We begin with the raw amino-acid sequence, 142 residues long: Large ribosomal subunit protein uL11 (142 aa).

Belongs to the universal ribosomal protein uL11 family. Part of the ribosomal stalk of the 50S ribosomal subunit. Interacts with L10 and the large rRNA to form the base of the stalk. L10 forms an elongated spine to which L12 dimers bind in a sequential fashion forming a multimeric L10(L12)X complex. Post-translationally, one or more lysine residues are methylated.

Functionally, forms part of the ribosomal stalk which helps the ribosome interact with GTP-bound translation factors. The protein is Large ribosomal subunit protein uL11 of Shewanella halifaxensis (strain HAW-EB4).